A 376-amino-acid chain; its full sequence is Glucose-1-phosphate adenylyltransferase (376 aa).

Alpha-D-glucose 1-phosphate is bound by residues Tyr-101, Gly-166, 181–182 (EK), and Ser-192.

Belongs to the bacterial/plant glucose-1-phosphate adenylyltransferase family. As to quaternary structure, homotetramer.

The enzyme catalyses alpha-D-glucose 1-phosphate + ATP + H(+) = ADP-alpha-D-glucose + diphosphate. Its pathway is glycan biosynthesis; glycogen biosynthesis. Its function is as follows. Involved in the biosynthesis of ADP-glucose, a building block required for the elongation reactions to produce glycogen. Catalyzes the reaction between ATP and alpha-D-glucose 1-phosphate (G1P) to produce pyrophosphate and ADP-Glc. This chain is Glucose-1-phosphate adenylyltransferase, found in Bacillus cereus (strain ATCC 10987 / NRS 248).